Reading from the N-terminus, the 319-residue chain is Acetyl esterase (319 aa).

Residues 91-93 (HGG) carry the Involved in the stabilization of the negatively charged intermediate by the formation of the oxyanion hole motif. Active-site residues include Ser-165, Asp-262, and His-292.

Belongs to the 'GDXG' lipolytic enzyme family. Homodimer. Interacts with MalT and MelA.

The protein localises to the cytoplasm. In terms of biological role, displays esterase activity towards short chain fatty esters (acyl chain length of up to 8 carbons). Able to hydrolyze triacetylglycerol (triacetin) and tributyrylglycerol (tributyrin), but not trioleylglycerol (triolein) or cholesterol oleate. Negatively regulates MalT activity by antagonizing maltotriose binding. Inhibits MelA galactosidase activity. This chain is Acetyl esterase, found in Escherichia coli O9:H4 (strain HS).